A 1067-amino-acid polypeptide reads, in one-letter code: Hemoglobin and hemoglobin-haptoglobin-binding protein B (1067 aa).

The first 24 residues, M1 to A24, serve as a signal peptide directing secretion. 6 consecutive repeat copies span residues Q26–N29, Q30–N33, Q34–N37, Q38–N41, Q42–N45, and Q46–N49. Positions Q26–N49 are 6 X 4 AA tandem repeats of Q-P-T-N. Low complexity predominate over residues Q26 to N51. The interval Q26–N53 is disordered. Residues E59–S66 carry the TonB box motif. Residues N71 to K196 enclose the TBDR plug domain. The TBDR beta-barrel domain occupies D204–F1067. A TonB C-terminal box motif is present at residues N1050–F1067.

Belongs to the TonB-dependent receptor family. Hemoglobin/haptoglobin binding protein subfamily.

The protein resides in the cell outer membrane. Acts as a receptor for hemoglobin or the hemoglobin/haptoglobin complex of the human host and is required for heme uptake. The polypeptide is Hemoglobin and hemoglobin-haptoglobin-binding protein B (hgbB) (Haemophilus influenzae).